We begin with the raw amino-acid sequence, 1496 residues long: DENN domain-containing protein 4B (1496 aa).

The 160-residue stretch at 44 to 203 (AEPITDVAVI…AVYLCYKVGL (160 aa)) folds into the MABP domain. Residues 195–369 (VYLCYKVGLA…NVPFPSPQRP (175 aa)) form the uDENN domain. The region spanning 390–526 (PLPLSGASFL…PYKVLLATLT (137 aa)) is the cDENN domain. In terms of domain architecture, dDENN spans 528-644 (LYQQLDQTYT…ECSFGSARHA (117 aa)). The segment at 720–744 (QPGALPVPGPSRSAPSSPAPRRTKQ) is disordered. Residues 729–739 (PSRSAPSSPAP) show a composition bias toward low complexity. PPR repeat units lie at residues 775–811 (WFLC…VVLP) and 812–846 (DEVC…GIVP). Disordered regions lie at residues 891–970 (LRER…ARGA), 995–1055 (VPWH…TPRR), 1067–1119 (PSRH…GSEW), and 1205–1227 (SRPS…PVPG). Positions 896–912 (QQQQQQQQQQQQQQQEQ) are enriched in low complexity. Polar residues-rich tracts occupy residues 913–924 (VSAHQEAGSSQA) and 935–944 (RPLQRQTTWA). Ser-953 bears the Phosphoserine mark. Residues 1075–1090 (RIPPPELPPDLPPPAR) are compositionally biased toward pro residues. Position 1092 is a phosphoserine (Ser-1092). Low complexity predominate over residues 1105-1119 (GSTASESSASLGSEW).

The protein localises to the golgi apparatus. Functionally, guanine nucleotide exchange factor (GEF) which may activate RAB10. Promotes the exchange of GDP to GTP, converting inactive GDP-bound Rab proteins into their active GTP-bound form. This Homo sapiens (Human) protein is DENN domain-containing protein 4B (DENND4B).